Here is a 201-residue protein sequence, read N- to C-terminus: CDP-diacylglycerol--serine O-phosphatidyltransferase (201 aa).

Helical transmembrane passes span 19–39 (IITG…LSII), 57–77 (FGAE…PAYL), 88–108 (LISA…FGIL), 112–132 (GFIG…CQLI), 133–153 (NSYL…ISDI), and 162–182 (IFIY…PHFA).

It belongs to the CDP-alcohol phosphatidyltransferase class-I family.

It localises to the cell membrane. It carries out the reaction a CDP-1,2-diacyl-sn-glycerol + L-serine = a 1,2-diacyl-sn-glycero-3-phospho-L-serine + CMP + H(+). In Methanocaldococcus jannaschii (strain ATCC 43067 / DSM 2661 / JAL-1 / JCM 10045 / NBRC 100440) (Methanococcus jannaschii), this protein is CDP-diacylglycerol--serine O-phosphatidyltransferase (pssA).